A 148-amino-acid chain; its full sequence is Large ribosomal subunit protein uL15 (148 aa).

Residues 1–57 (MRLNDVKPQKGSKKRRRRVGRGISAGQGASAGLGMRGQKSRSGSGTRPGFEGGQQPL) are disordered. Over residues 10–20 (KGSKKRRRRVG) the composition is skewed to basic residues. Residues 23–35 (ISAGQGASAGLGM) show a composition bias toward gly residues.

The protein belongs to the universal ribosomal protein uL15 family. In terms of assembly, part of the 50S ribosomal subunit.

Its function is as follows. Binds to the 23S rRNA. This chain is Large ribosomal subunit protein uL15, found in Nostoc sp. (strain PCC 7120 / SAG 25.82 / UTEX 2576).